The chain runs to 183 residues: UPF0302 protein BH3876 (183 aa).

Belongs to the UPF0302 family.

The sequence is that of UPF0302 protein BH3876 from Halalkalibacterium halodurans (strain ATCC BAA-125 / DSM 18197 / FERM 7344 / JCM 9153 / C-125) (Bacillus halodurans).